Here is a 204-residue protein sequence, read N- to C-terminus: dITP/XTP pyrophosphatase (204 aa).

14–19 (THNKGK) is a binding site for substrate. Glu46 and Asp75 together coordinate Mg(2+). Asp75 serves as the catalytic Proton acceptor. Substrate is bound by residues Ser76, 161 to 164 (FGYD), Lys184, and 189 to 190 (HR).

The protein belongs to the HAM1 NTPase family. Homodimer. Mg(2+) serves as cofactor.

It carries out the reaction XTP + H2O = XMP + diphosphate + H(+). The enzyme catalyses dITP + H2O = dIMP + diphosphate + H(+). It catalyses the reaction ITP + H2O = IMP + diphosphate + H(+). Its function is as follows. Pyrophosphatase that catalyzes the hydrolysis of nucleoside triphosphates to their monophosphate derivatives, with a high preference for the non-canonical purine nucleotides XTP (xanthosine triphosphate), dITP (deoxyinosine triphosphate) and ITP. Seems to function as a house-cleaning enzyme that removes non-canonical purine nucleotides from the nucleotide pool, thus preventing their incorporation into DNA/RNA and avoiding chromosomal lesions. This Ruegeria pomeroyi (strain ATCC 700808 / DSM 15171 / DSS-3) (Silicibacter pomeroyi) protein is dITP/XTP pyrophosphatase.